The following is a 234-amino-acid chain: MSTPFYVSPEQIMKDRAEFARKGIARGRSNVVLQYADGILFVAENTSKALHKISEVYDRIAFAAVGRYNEFENLRVAGVRLADLTGYTYDRRDVTGRTIANAYAQTLGAIFSGATEKPYEVEIVVAEVGDTPDGDSMYRLTYDGSVAEEHGYVAMGGQAEQITAQLKDRYVENLPLGEALRLAVDVLSRASDGGEPRTLTPDQLEVAALDRTRGRRAFRRFIGAQLQELLRPTS.

This sequence belongs to the peptidase T1A family. In terms of assembly, the 20S proteasome core is composed of 14 alpha and 14 beta subunits that assemble into four stacked heptameric rings, resulting in a barrel-shaped structure. The two inner rings, each composed of seven catalytic beta subunits, are sandwiched by two outer rings, each composed of seven alpha subunits. The catalytic chamber with the active sites is on the inside of the barrel. Has a gated structure, the ends of the cylinder being occluded by the N-termini of the alpha-subunits. Is capped by the proteasome-associated ATPase, ARC.

The protein localises to the cytoplasm. It functions in the pathway protein degradation; proteasomal Pup-dependent pathway. With respect to regulation, the formation of the proteasomal ATPase ARC-20S proteasome complex, likely via the docking of the C-termini of ARC into the intersubunit pockets in the alpha-rings, may trigger opening of the gate for substrate entry. Interconversion between the open-gate and close-gate conformations leads to a dynamic regulation of the 20S proteasome proteolysis activity. Functionally, component of the proteasome core, a large protease complex with broad specificity involved in protein degradation. The sequence is that of Proteasome subunit alpha from Acidothermus cellulolyticus (strain ATCC 43068 / DSM 8971 / 11B).